We begin with the raw amino-acid sequence, 271 residues long: Membrane protein insertase YidC 1 (271 aa).

Positions Met-1 to Ala-20 are cleaved as a signal peptide. Cys-21 carries the N-palmitoyl cysteine lipid modification. Cys-21 is lipidated: S-diacylglycerol cysteine. Transmembrane regions (helical) follow at residues Ile-45–Ile-65, Tyr-124–Leu-144, Pro-163–Leu-183, and Val-201–Trp-221.

The protein belongs to the OXA1/ALB3/YidC family. Type 2 subfamily.

It is found in the cell membrane. In terms of biological role, required for the insertion and/or proper folding and/or complex formation of integral membrane proteins into the membrane. Involved in integration of membrane proteins that insert both dependently and independently of the Sec translocase complex, as well as at least some lipoproteins. The chain is Membrane protein insertase YidC 1 from Streptococcus agalactiae serotype V (strain ATCC BAA-611 / 2603 V/R).